A 179-amino-acid polypeptide reads, in one-letter code: UPF0227 protein Shewana3_2292 (179 aa).

This sequence belongs to the UPF0227 family.

The chain is UPF0227 protein Shewana3_2292 from Shewanella sp. (strain ANA-3).